The sequence spans 265 residues: MSFVSSKIFAITGGASGIGAATCRLLAKRGAATLCVGDLCSENMKLLEKDIKKINPDTKVHCTVLDVSSSSNVDEWIQDIITTFGDLHGAANIAGIAQGAGLRQAPTILEDDDQQWKKVFQVNLDGVLYSTRAQVRAMKEFSSTNPGDRSIVNVASIASMSHMPDVFAYGTSKAGCAYFTTFEVTLFALGYFSNIMGMLEGITRTPMLPRFVPSAKTQEEVEETYKKEGFSVIEADDVARTIVWLLSEDSRPVFGANINVGACMP.

The N-terminal stretch at 1 to 20 (MSFVSSKIFAITGGASGIGA) is a signal peptide. The NADP(+) site is built by isoleucine 18, aspartate 66, arginine 132, tyrosine 169, lysine 173, and threonine 205. Residue tyrosine 169 is the Proton donor of the active site. Lysine 173 serves as the catalytic Lowers pKa of active site Tyr.

Belongs to the short-chain dehydrogenases/reductases (SDR) family. In terms of assembly, homotetramer.

The catalysed reaction is chanoclavine-I + NAD(+) = chanoclavine-I aldehyde + NADH + H(+). The protein operates within alkaloid biosynthesis; ergot alkaloid biosynthesis. Functionally, chanoclavine-I dehydrogenase; part of the gene cluster that mediates the biosynthesis of fungal ergot alkaloid. DmaW catalyzes the first step of ergot alkaloid biosynthesis by condensing dimethylallyl diphosphate (DMAP) and tryptophan to form 4-dimethylallyl-L-tryptophan. The second step is catalyzed by the methyltransferase easF that methylates 4-dimethylallyl-L-tryptophan in the presence of S-adenosyl-L-methionine, resulting in the formation of 4-dimethylallyl-L-abrine. The catalase easC and the FAD-dependent oxidoreductase easE then transform 4-dimethylallyl-L-abrine to chanoclavine-I which is further oxidized by easD in the presence of NAD(+), resulting in the formation of chanoclavine-I aldehyde. Chanoclavine-I aldehyde is the precursor of ergoamides and ergopeptines in Clavicipitaceae, and clavine-type alcaloids such as fumiclavine in Trichocomaceae. However, the metabolites downstream of chanoclavine-I aldehyde in Arthrodermataceae have not been identified yet. The protein is Chanoclavine-I dehydrogenase easD of Trichophyton verrucosum (strain HKI 0517).